The primary structure comprises 385 residues: Calcium/calmodulin-dependent protein kinase type 1D (385 aa).

In terms of domain architecture, Protein kinase spans 23 to 279 (FEFKETLGTG…CEQAARHPWI (257 aa)). ATP is bound by residues 29 to 37 (LGTGAFSEV) and Lys-52. Residue Lys-113 forms a Glycyl lysine isopeptide (Lys-Gly) (interchain with G-Cter in SUMO2) linkage. Ser-122 is modified (phosphoserine). Asp-144 (proton acceptor) is an active-site residue. Thr-180 carries the phosphothreonine; by CaMKK1 and CaMKK2 modification. Positions 279–319 (IAGDTALNKNIHESVSAQIRKNFAKSKWRQAFNATAVVRHM) are autoinhibitory domain. The interval 299–320 (KNFAKSKWRQAFNATAVVRHMR) is calmodulin-binding. A Nuclear export signal motif is present at residues 318–324 (HMRKLHL). The interval 360–385 (SSGVSGVGAERRPRPTTVTAVHSGSK) is disordered. Over residues 375–385 (TTVTAVHSGSK) the composition is skewed to polar residues.

The protein belongs to the protein kinase superfamily. CAMK Ser/Thr protein kinase family. CaMK subfamily. As to expression, widely expressed. Highly and mostly expressed in polymorphonuclear leukocytes (neutrophilic and eosinophilic granulocytes) while little or no expression is observed in monocytes and lymphocytes.

The protein resides in the cytoplasm. The protein localises to the nucleus. It catalyses the reaction L-seryl-[protein] + ATP = O-phospho-L-seryl-[protein] + ADP + H(+). The catalysed reaction is L-threonyl-[protein] + ATP = O-phospho-L-threonyl-[protein] + ADP + H(+). Its activity is regulated as follows. Activated by Ca(2+)/calmodulin. Binding of calmodulin results in conformational change that relieves intrasteric autoinhibition and allows phosphorylation of Thr-180 within the activation loop by CaMKK1 or CaMKK2. Phosphorylation of Thr-180 results in several fold increase in total activity. Unlike CaMK4, may be unable to exhibit autonomous activity after Ca(2+)/calmodulin activation. In terms of biological role, calcium/calmodulin-dependent protein kinase that operates in the calcium-triggered CaMKK-CaMK1 signaling cascade and, upon calcium influx, activates CREB-dependent gene transcription, regulates calcium-mediated granulocyte function and respiratory burst and promotes basal dendritic growth of hippocampal neurons. In neutrophil cells, required for cytokine-induced proliferative responses and activation of the respiratory burst. Activates the transcription factor CREB1 in hippocampal neuron nuclei. May play a role in apoptosis of erythroleukemia cells. In vitro, phosphorylates transcription factor CREM isoform Beta. This is Calcium/calmodulin-dependent protein kinase type 1D (CAMK1D) from Homo sapiens (Human).